The following is a 322-amino-acid chain: Pantothenate kinase (322 aa).

100-107 (GSVAVGKS) provides a ligand contact to ATP.

This sequence belongs to the prokaryotic pantothenate kinase family.

It is found in the cytoplasm. The catalysed reaction is (R)-pantothenate + ATP = (R)-4'-phosphopantothenate + ADP + H(+). The protein operates within cofactor biosynthesis; coenzyme A biosynthesis; CoA from (R)-pantothenate: step 1/5. The protein is Pantothenate kinase of Agrobacterium fabrum (strain C58 / ATCC 33970) (Agrobacterium tumefaciens (strain C58)).